The chain runs to 111 residues: Universal stress protein B (111 aa).

The next 2 helical transmembrane spans lie at 1 to 21 and 90 to 110; these read MINTVALFWALFIVCVVNMLR and FILTSALCGLVVVALIALMLW.

It belongs to the universal stress protein B family.

It localises to the cell inner membrane. The chain is Universal stress protein B from Edwardsiella ictaluri (strain 93-146).